We begin with the raw amino-acid sequence, 176 residues long: Large ribosomal subunit protein eL20 (176 aa).

The protein belongs to the eukaryotic ribosomal protein eL20 family. In terms of assembly, component of the large ribosomal subunit.

Its subcellular location is the cytoplasm. Functionally, component of the large ribosomal subunit. The ribosome is a large ribonucleoprotein complex responsible for the synthesis of proteins in the cell. In Salmo salar (Atlantic salmon), this protein is Large ribosomal subunit protein eL20 (rpl18a).